A 795-amino-acid chain; its full sequence is MDADKSEGCCSVQLIDGDGIYNVSRIDHFIKDVKLADCGLSYAVVSIMGPQSSGKSTLLNHLFGTNFMEMDAFKGRSQTTKGIWLARCAGIEPCTLVMDLEGTDGRERGEDDTAFEKQSALFALAISDIVLINMWCHDIGREQAANKPLLKTVFQVMMRLFSPRKTTMLFVIRDKTRTPLENLEPVLREDIQKIWDSVPKPEAHKETPLSDFFNVEVVALSSYEEKEEQFKEQIASLRQRFMHSIAPGGLAGDRRGVIPASGFAFSADQIWRVIKENKDLDLPAHKVMVATVRCEEIANEKFAHFITNEDWRKLDEEVQAGPVSNFGKRLTTILGSCLSEYDGEATFFDEGVRSSKRQQLEEKLLQLVNPAFQDVLGHIRWGILEKFKASFDKALGIGEGFSSASQDWFKACMTQFDEECAGAIIEQANWDTSKVRDKLVRDIEAHISSVRTSKLSELTSLYESKVHEALSEPVEALLDGANDETWSTVKKLHRRETESAVSGLSSALAGFDMEEETRDRMVKSLQDYARGVIETKAKEEAVRVLMRMKERFGTIFSHDSDSMPRVWTGKEDLRAITKSARSASLKLLSVMAVIRLGDEPDNIEKTLTVALLDPTKNDTSKKSITTSDPLASSTWDEVPSSRTLITPVQCKSIWRQFKTETEYTVTQAISAQEANRRGNNWLPPPWAILALIVLGFNEFMTLLRNPLYLGVMFVAFLLAKALWTQLDIPGEFRNGALPGLISISAKFVPTVMNLIKNLAAQGEDPPAANPENRRSSNNTSSSENPPDHKSSSKED.

Over 1–682 (MDADKSEGCC…EANRRGNNWL (682 aa)) the chain is Cytoplasmic. The 216-residue stretch at 39–254 (GLSYAVVSIM…IAPGGLAGDR (216 aa)) folds into the GB1/RHD3-type G domain. 49 to 56 (GPQSSGKS) provides a ligand contact to GTP. Residues 218 to 244 (VALSSYEEKEEQFKEQIASLRQRFMHS) are a coiled coil. The helical transmembrane segment at 683-703 (PPPWAILALIVLGFNEFMTLL) threads the bilayer. Residues 704–706 (RNP) are Lumenal-facing. Residues 707-727 (LYLGVMFVAFLLAKALWTQLD) traverse the membrane as a helical segment. Residues 728 to 795 (IPGEFRNGAL…PDHKSSSKED (68 aa)) lie on the Cytoplasmic side of the membrane. The interval 761–795 (QGEDPPAANPENRRSSNNTSSSENPPDHKSSSKED) is disordered. A compositionally biased stretch (low complexity) spans 775–784 (SSNNTSSSEN). Residues 785–795 (PPDHKSSSKED) are compositionally biased toward basic and acidic residues.

It belongs to the TRAFAC class dynamin-like GTPase superfamily. GB1/RHD3 GTPase family. RHD3 subfamily. Specifically expressed in flowers.

Its subcellular location is the endoplasmic reticulum membrane. Probable GTP-binding protein that may be involved in cell development. This Arabidopsis thaliana (Mouse-ear cress) protein is Protein ROOT HAIR DEFECTIVE 3 homolog 1.